Consider the following 270-residue polypeptide: Formamidopyrimidine-DNA glycosylase (270 aa).

The active-site Schiff-base intermediate with DNA is Pro2. Glu3 acts as the Proton donor in catalysis. Residue Lys58 is the Proton donor; for beta-elimination activity of the active site. Positions 90, 109, and 152 each coordinate DNA. An FPG-type zinc finger spans residues 237 to 270 (RVYGREGEACECGGAIVRVVQSGRSTFYCRKCQR). Arg260 (proton donor; for delta-elimination activity) is an active-site residue.

It belongs to the FPG family. As to quaternary structure, monomer. Zn(2+) serves as cofactor.

It catalyses the reaction Hydrolysis of DNA containing ring-opened 7-methylguanine residues, releasing 2,6-diamino-4-hydroxy-5-(N-methyl)formamidopyrimidine.. The enzyme catalyses 2'-deoxyribonucleotide-(2'-deoxyribose 5'-phosphate)-2'-deoxyribonucleotide-DNA = a 3'-end 2'-deoxyribonucleotide-(2,3-dehydro-2,3-deoxyribose 5'-phosphate)-DNA + a 5'-end 5'-phospho-2'-deoxyribonucleoside-DNA + H(+). In terms of biological role, involved in base excision repair of DNA damaged by oxidation or by mutagenic agents. Acts as a DNA glycosylase that recognizes and removes damaged bases. Has a preference for oxidized purines, such as 7,8-dihydro-8-oxoguanine (8-oxoG). Has AP (apurinic/apyrimidinic) lyase activity and introduces nicks in the DNA strand. Cleaves the DNA backbone by beta-delta elimination to generate a single-strand break at the site of the removed base with both 3'- and 5'-phosphates. This is Formamidopyrimidine-DNA glycosylase from Sphingopyxis alaskensis (strain DSM 13593 / LMG 18877 / RB2256) (Sphingomonas alaskensis).